Here is a 437-residue protein sequence, read N- to C-terminus: Serine carboxypeptidase-like 9 (437 aa).

A signal peptide spans 1–21 (MSLILKFMLLILLVSSHHVRS). The N-linked (GlcNAc...) asparagine glycan is linked to N101. The active site involves S175. 2 disulfides stabilise this stretch: C243-C257 and C281-C293. 2 N-linked (GlcNAc...) asparagine glycosylation sites follow: N307 and N346. Residue D362 is part of the active site. Residue N378 is glycosylated (N-linked (GlcNAc...) asparagine). H415 is an active-site residue.

It belongs to the peptidase S10 family. As to expression, expressed in seedlings, leaves, flowers and siliques.

The protein resides in the secreted. The enzyme catalyses 2 1-O-(trans-sinapoyl)-beta-D-glucose = 1,2-di-O-sinapoyl beta-D-glucose + D-glucose. In terms of biological role, catalyzes the formation of 1,2-bis-O-sinapoyl beta-D-glucoside and an unidentified compound 1. The protein is Serine carboxypeptidase-like 9 (SCPL9) of Arabidopsis thaliana (Mouse-ear cress).